The sequence spans 223 residues: UPF0758 protein Cvib_1178 (223 aa).

One can recognise an MPN domain in the interval 100–222 (KIQGARDVYE…WYSFRENNQL (123 aa)). The Zn(2+) site is built by His171, His173, and Asp184. Residues 171–184 (HNHPSGDTEPSNAD) carry the JAMM motif motif.

Belongs to the UPF0758 family.

This chain is UPF0758 protein Cvib_1178, found in Chlorobium phaeovibrioides (strain DSM 265 / 1930) (Prosthecochloris vibrioformis (strain DSM 265)).